Consider the following 1006-residue polypeptide: Probable sulfite reductase [NADPH] flavoprotein component (1006 aa).

Positions 622-852 (EKVFTVHVRA…AVKTSVMKLP (231 aa)) constitute an FAD-binding FR-type domain. Residues 658-669 (YDIGEALGVYGV) and 788-798 (IKRREYSISSS) contribute to the FAD site.

FAD serves as cofactor. FMN is required as a cofactor.

It carries out the reaction hydrogen sulfide + 3 NADP(+) + 3 H2O = sulfite + 3 NADPH + 4 H(+). It participates in sulfur metabolism; hydrogen sulfide biosynthesis; hydrogen sulfide from sulfite (NADPH route): step 1/1. In terms of biological role, this enzyme catalyzes the 6-electron reduction of sulfite to sulfide. This is one of several activities required for the biosynthesis of L-cysteine from sulfate. This chain is Probable sulfite reductase [NADPH] flavoprotein component, found in Schizosaccharomyces pombe (strain 972 / ATCC 24843) (Fission yeast).